Consider the following 425-residue polypeptide: UPF0229 protein ETA_15540 (425 aa).

Residues 60–111 form a disordered region; that stretch reads NEPSFHQGRGGERYRVHPGNDHFVQNDRVDRPQGGGAGGSGQGNAGKDGEGQ. Residues 68–90 show a composition bias toward basic and acidic residues; that stretch reads RGGERYRVHPGNDHFVQNDRVDR. The segment covering 92 to 105 has biased composition (gly residues); that stretch reads QGGGAGGSGQGNAG.

It belongs to the UPF0229 family.

In Erwinia tasmaniensis (strain DSM 17950 / CFBP 7177 / CIP 109463 / NCPPB 4357 / Et1/99), this protein is UPF0229 protein ETA_15540.